The sequence spans 489 residues: Long chain base biosynthesis protein 2b (489 aa).

The chain crosses the membrane as a helical span at residues 2 to 22 (ITIPYLTAVSTYFSYGLLFAF). Position 311 is an N6-(pyridoxal phosphate)lysine (lysine 311).

It belongs to the class-II pyridoxal-phosphate-dependent aminotransferase family. Heterodimer with LCB1. Component of the serine palmitoyltransferase (SPT) complex, composed of LCB1 and LCB2 (LCB2a or LCB2b). The cofactor is pyridoxal 5'-phosphate. Ubiquitous with the highest expression in flowers.

It localises to the endoplasmic reticulum membrane. The catalysed reaction is L-serine + hexadecanoyl-CoA + H(+) = 3-oxosphinganine + CO2 + CoA. The protein operates within lipid metabolism; sphingolipid metabolism. Serine palmitoyltransferase (SPT). The heterodimer formed with LCB1 constitutes the catalytic core. Plays an important role during male gametogenesis and embryogenesis. In Arabidopsis thaliana (Mouse-ear cress), this protein is Long chain base biosynthesis protein 2b (LCB2b).